We begin with the raw amino-acid sequence, 550 residues long: Thermosome subunit (550 aa).

A disordered region spans residues K529 to D550. Low complexity predominate over residues E541 to D550.

The protein belongs to the TCP-1 chaperonin family. As to quaternary structure, forms an oligomeric complex of eight-membered rings.

Its function is as follows. Molecular chaperone; binds unfolded polypeptides in vitro, and has a weak ATPase activity. This Pyrococcus abyssi (strain GE5 / Orsay) protein is Thermosome subunit (ths).